The following is a 229-amino-acid chain: PKHD-type hydroxylase BBta_3541 (229 aa).

Positions 78–180 (QIFPPLFNRY…RVASFFWMQS (103 aa)) constitute a Fe2OG dioxygenase domain. Residues histidine 98, aspartate 100, and histidine 161 each coordinate Fe cation. 2-oxoglutarate is bound at residue arginine 171.

Requires Fe(2+) as cofactor. L-ascorbate is required as a cofactor.

This Bradyrhizobium sp. (strain BTAi1 / ATCC BAA-1182) protein is PKHD-type hydroxylase BBta_3541.